The primary structure comprises 859 residues: ATP-dependent RNA helicase DDX24 (859 aa).

Lys-17 carries the post-translational modification N6-acetyllysine. Ser-60 bears the Phosphoserine mark. The interval 61–175 is disordered; it reads PAKNPSSLFS…SQSTAAKVPK (115 aa). Lys-71 carries the N6-acetyllysine modification. Residues Ser-82 and Ser-94 each carry the phosphoserine modification. The segment covering 82–91 has biased composition (acidic residues); the sequence is SEEEEEEEGE. The span at 95–105 shows a compositional bias: basic residues; the sequence is PKKKIKLKKSK. A compositionally biased stretch (polar residues) spans 106 to 115; it reads NVATEGTSTQ. The short motif at 192 to 220 is the Q motif element; that stretch reads SAWKDLFVPRPVLRALSFLGFSAPTPIQV. The 305-residue stretch at 224–528 folds into the Helicase ATP-binding domain; that stretch reads APAIRDKLDI…RILHKKHTKK (305 aa). ATP is bound at residue 237–244; it reads AETGSGKT. The disordered stretch occupies residues 262-374; that stretch reads NAAPPPSNTE…QTGNLKQELD (113 aa). The span at 277–293 shows a compositional bias: basic and acidic residues; the sequence is TRPEAGAETRSPGKAEA. 2 positions are modified to phosphoserine: Ser-287 and Ser-295. Acidic residues predominate over residues 294 to 304; sequence ESDALPDDTVI. Thr-302 carries the phosphothreonine modification. Residue Lys-370 forms a Glycyl lysine isopeptide (Lys-Gly) (interchain with G-Cter in SUMO2) linkage. The DEAD box signature appears at 471–474; it reads DEAD. Positions 578 to 723 constitute a Helicase C-terminal domain; it reads YLYYFLMQYP…LFPVQTKYMD (146 aa). Glycyl lysine isopeptide (Lys-Gly) (interchain with G-Cter in SUMO2) cross-links involve residues Lys-624, Lys-808, and Lys-825. Polar residues-rich tracts occupy residues 799–814 and 823–834; these read PLFT…TQSG and PSKSESALSCLS. The interval 799-859 is disordered; it reads PLFTESQKTK…EQPQPSTSAN (61 aa).

Belongs to the DEAD box helicase family. DDX24/MAK5 subfamily. In terms of assembly, interacts with FADD. Interacts with RIPK1; this interaction disrupts RLR signaling activation of IFN-dependent transcription factor IRF7. Interacts with NIP7. Interacts with EP300; this interaction prevents TP53 acetylation mediated by EP300. In terms of processing, ubiquitinated by MDM2 without targeting DDX24 for proteasomal degradation. Instead, polyubiquitylated DDX24 promotes interaction with NIP7, a component of pre-rRNP processing complex, and associates with pre-rRNA molecules and pre-ribosomal particles.

The protein resides in the cytoplasm. It localises to the nucleus. It carries out the reaction ATP + H2O = ADP + phosphate + H(+). Functionally, ATP-dependent RNA helicase that plays a role in various aspects of RNA metabolism including pre-mRNA splicing and is thereby involved in different biological processes such as cell cycle regulation or innate immunity. Plays an inhibitory role in TP53 transcriptional activity and subsequently in TP53 controlled cell growth arrest and senescence by inhibiting its EP300 mediated acetylation. Negatively regulates cytosolic RNA-mediated innate immune signaling at least in part by affecting RIPK1/IRF7 interactions. Alternatively, possesses antiviral activity by recognizing gammaherpesvirus transcripts in the context of lytic reactivation. Plays an essential role in cell cycle regulation in vascular smooth muscle cells by interacting with and regulating FANCA (Fanconi anemia complementation group A) mRNA. This Pongo abelii (Sumatran orangutan) protein is ATP-dependent RNA helicase DDX24 (DDX24).